The sequence spans 347 residues: MEFDKFKQSAFRTSKISAPSRLQGLGDRIDGVNDHKDAYHFYTNRGVRDVSNAGLCSMEYNDETLRAAAALSRELISAELVEENPELEEVVKRVSTYIDPLTEPEVRDLNKQSHGIYRMSDKSFNLTPNRADNYLLQYKAIITKRAGDGDTTYKDLEDKLNARCSRAEGCYYRKVYPEFKCAGPVAMPDSIKNIFTYVLPASPFKGKTINLILHMINNPMDEAGKSMSDPIVKAMSQCLVCTIINNAEKDFKISASQVNNKTEEPLYLMNIEDEDSEMFMTITIPQFDSCVAEVDVPRYTRVRLPMIRFREFYRPYQNPTTGIWEVIHYPEGWSNRDEKEDEFMSNV.

This is an uncharacterized protein from Magallana gigas (Pacific oyster).